The primary structure comprises 273 residues: Non-structural protein NS-S (273 aa).

This sequence belongs to the phlebovirus NS-S protein family. As to quaternary structure, interacts with host MAVS; this interaction weakly inhibits the host IFN response.

It localises to the host cytoplasm. In terms of biological role, acts as a weak IFN antagonist. In Homo sapiens (Human), this protein is Non-structural protein NS-S (NSS).